Consider the following 164-residue polypeptide: UPF0305 protein MTH_812 (164 aa).

This sequence belongs to the UPF0305 family.

The protein is UPF0305 protein MTH_812 of Methanothermobacter thermautotrophicus (strain ATCC 29096 / DSM 1053 / JCM 10044 / NBRC 100330 / Delta H) (Methanobacterium thermoautotrophicum).